Reading from the N-terminus, the 168-residue chain is Photosystem I assembly protein Ycf3 (168 aa).

TPR repeat units follow at residues 35 to 68 (AFAY…EMDP), 72 to 105 (SYIL…NPFL), and 120 to 153 (GEQA…TPGN).

The protein belongs to the Ycf3 family.

It localises to the plastid membrane. In terms of biological role, essential for the assembly of the photosystem I (PSI) complex. May act as a chaperone-like factor to guide the assembly of the PSI subunits. The polypeptide is Photosystem I assembly protein Ycf3 (Cuscuta gronovii (Common dodder)).